A 184-amino-acid chain; its full sequence is Large ribosomal subunit protein uL22 (184 aa).

Belongs to the universal ribosomal protein uL22 family.

The chain is Large ribosomal subunit protein uL22 (RPL17) from Yarrowia lipolytica (strain CLIB 122 / E 150) (Yeast).